The chain runs to 338 residues: Glycerol-3-phosphate dehydrogenase [NAD(P)+] (338 aa).

Serine 13, tryptophan 14, and lysine 108 together coordinate NADPH. 3 residues coordinate sn-glycerol 3-phosphate: lysine 108, glycine 139, and serine 141. NADPH is bound at residue alanine 143. Positions 194, 247, 257, 258, and 259 each coordinate sn-glycerol 3-phosphate. Lysine 194 functions as the Proton acceptor in the catalytic mechanism. Arginine 258 lines the NADPH pocket. NADPH contacts are provided by valine 282 and glutamate 284.

The protein belongs to the NAD-dependent glycerol-3-phosphate dehydrogenase family.

It localises to the cytoplasm. It catalyses the reaction sn-glycerol 3-phosphate + NAD(+) = dihydroxyacetone phosphate + NADH + H(+). The enzyme catalyses sn-glycerol 3-phosphate + NADP(+) = dihydroxyacetone phosphate + NADPH + H(+). The protein operates within membrane lipid metabolism; glycerophospholipid metabolism. Its function is as follows. Catalyzes the reduction of the glycolytic intermediate dihydroxyacetone phosphate (DHAP) to sn-glycerol 3-phosphate (G3P), the key precursor for phospholipid synthesis. In Streptococcus pneumoniae (strain JJA), this protein is Glycerol-3-phosphate dehydrogenase [NAD(P)+].